The sequence spans 547 residues: Chaperonin GroEL (547 aa).

Residues 30–33, Lys51, 87–91, Gly415, and Asp495 each bind ATP; these read TLGP and DGTTT.

This sequence belongs to the chaperonin (HSP60) family. In terms of assembly, forms a cylinder of 14 subunits composed of two heptameric rings stacked back-to-back. Interacts with the co-chaperonin GroES.

It localises to the cytoplasm. It catalyses the reaction ATP + H2O + a folded polypeptide = ADP + phosphate + an unfolded polypeptide.. Functionally, together with its co-chaperonin GroES, plays an essential role in assisting protein folding. The GroEL-GroES system forms a nano-cage that allows encapsulation of the non-native substrate proteins and provides a physical environment optimized to promote and accelerate protein folding. This is Chaperonin GroEL from Ralstonia nicotianae (strain ATCC BAA-1114 / GMI1000) (Ralstonia solanacearum).